The primary structure comprises 745 residues: Phosphoribosylformylglycinamidine synthase subunit PurL (745 aa).

His-50 is a catalytic residue. Tyr-53 and Lys-92 together coordinate ATP. Glu-94 is a binding site for Mg(2+). Substrate-binding positions include 95 to 98 and Arg-117; that span reads SHNH. The active-site Proton acceptor is the His-96. Asp-118 provides a ligand contact to Mg(2+). Gln-241 contributes to the substrate binding site. Mg(2+) is bound at residue Asp-269. 313-315 contacts substrate; the sequence is ESQ. The ATP site is built by Asp-495 and Gly-532. Asn-533 provides a ligand contact to Mg(2+). Ser-535 serves as a coordination point for substrate.

It belongs to the FGAMS family. As to quaternary structure, monomer. Part of the FGAM synthase complex composed of 1 PurL, 1 PurQ and 2 PurS subunits.

It is found in the cytoplasm. It catalyses the reaction N(2)-formyl-N(1)-(5-phospho-beta-D-ribosyl)glycinamide + L-glutamine + ATP + H2O = 2-formamido-N(1)-(5-O-phospho-beta-D-ribosyl)acetamidine + L-glutamate + ADP + phosphate + H(+). It participates in purine metabolism; IMP biosynthesis via de novo pathway; 5-amino-1-(5-phospho-D-ribosyl)imidazole from N(2)-formyl-N(1)-(5-phospho-D-ribosyl)glycinamide: step 1/2. Functionally, part of the phosphoribosylformylglycinamidine synthase complex involved in the purines biosynthetic pathway. Catalyzes the ATP-dependent conversion of formylglycinamide ribonucleotide (FGAR) and glutamine to yield formylglycinamidine ribonucleotide (FGAM) and glutamate. The FGAM synthase complex is composed of three subunits. PurQ produces an ammonia molecule by converting glutamine to glutamate. PurL transfers the ammonia molecule to FGAR to form FGAM in an ATP-dependent manner. PurS interacts with PurQ and PurL and is thought to assist in the transfer of the ammonia molecule from PurQ to PurL. In Allorhizobium ampelinum (strain ATCC BAA-846 / DSM 112012 / S4) (Agrobacterium vitis (strain S4)), this protein is Phosphoribosylformylglycinamidine synthase subunit PurL.